We begin with the raw amino-acid sequence, 420 residues long: Protein-lysine 6-oxidase (420 aa).

An N-terminal signal peptide occupies residues 1–27 (MRCAPPGLLLAQLHACIFWSGLWPAGC). The propeptide at 28–171 (QSPPAAWRQR…RPGREDVMVG (144 aa)) is removed by BMP1. The tract at residues 54–177 (AQYQPPRRRQ…VMVGDDPYSP (124 aa)) is disordered. Residue Asn78 is glycosylated (N-linked (GlcNAc...) asparagine). The span at 82–92 (PRAAAAAAARP) shows a compositional bias: low complexity. The segment covering 93 to 105 (QPEPQPQAQPQPR) has biased composition (pro residues). Basic residues-rich tracts occupy residues 107-119 (RSSR…RRHW) and 134-147 (APRR…SRRR). A Sulfotyrosine modification is found at Tyr190. The interval 216 to 420 (PDLVPDPYYI…YASGCTISPY (205 aa)) is lysyl-oxidase like. 5 disulfide bridges follow: Cys241-Cys247, Cys294-Cys343, Cys327-Cys333, Cys354-Cys364, and Cys401-Cys415. The Cu cation site is built by His295, His297, and His299. A cross-link (lysine tyrosylquinone (Lys-Tyr)) is located at residues 323 to 358 (KASFCLEDTSCDYGYYRRYACTAHTQGLSPGCYDTY). 2',4',5'-topaquinone is present on Tyr358.

This sequence belongs to the lysyl oxidase family. Cu cation is required as a cofactor. Lysine tyrosylquinone residue serves as cofactor. The lysine tyrosylquinone cross-link (LTQ) is generated by condensation of the epsilon-amino group of a lysine with a topaquinone produced by oxidation of tyrosine. In terms of processing, proteolytically cleaved by BMP1 which removes the propeptide. Also proteolytically cleaved by ADAMTS2 and ADAMTS14, but not by ADAMTS3, at an additional cleavage site downstream of the BMP1 cleavage site. The propeptide plays a role in directing the deposition of this enzyme to elastic fibers, via interaction with tropoelastin. Cleavage by BMP1 to remove the propeptide does not increase enzymatic activity but increases binding to collagen. Cleavage by ADAMTS2 produces a form with reduced collagen-binding activity. Post-translationally, sulfated at Tyr-190 and also at either Tyr-186 or Tyr-187 which enhances binding to collagen.

It is found in the secreted. Its subcellular location is the extracellular space. It carries out the reaction L-lysyl-[protein] + O2 + H2O = (S)-2-amino-6-oxohexanoyl-[protein] + H2O2 + NH4(+). In terms of biological role, responsible for the post-translational oxidative deamination of peptidyl lysine residues in precursors to fibrous collagen and elastin. In addition to cross linking of extracellular matrix proteins, it may have a direct role in tumor suppression. This is Protein-lysine 6-oxidase (LOX) from Gallus gallus (Chicken).